Here is a 1243-residue protein sequence, read N- to C-terminus: Protein MMS22-like (1243 aa).

The protein belongs to the MMS22 family. MMS22L subfamily. As to quaternary structure, component of the MMS22L-TONSL complex, a complex at least composed of MMS22L and TONSL/NFKBIL2. Interacts with RAD51; interaction is direct. Post-translationally, degraded by the ubiquitin-proteasome system upon replication stress.

The protein resides in the nucleus. It is found in the chromosome. Its function is as follows. Component of the MMS22L-TONSL complex, a complex that promotes homologous recombination-mediated repair of double-strand breaks (DSBs) at stalled or collapsed replication forks. The MMS22L-TONSL complex is required to maintain genome integrity during DNA replication. It mediates the assembly of RAD51 filaments on single-stranded DNA (ssDNA): the MMS22L-TONSL complex is recruited to DSBs following histone replacement by histone chaperones and eviction of the replication protein A complex (RPA/RP-A) from DSBs. Following recruitment to DSBs, the TONSL-MMS22L complex promotes recruitment of RAD51 filaments and subsequent homologous recombination. Within the complex, MMS22L acts by binding ssDNA. This Homo sapiens (Human) protein is Protein MMS22-like.